We begin with the raw amino-acid sequence, 157 residues long: Small ribosomal subunit protein uS7 (157 aa).

This sequence belongs to the universal ribosomal protein uS7 family. As to quaternary structure, part of the 30S ribosomal subunit. Contacts proteins S9 and S11.

Its function is as follows. One of the primary rRNA binding proteins, it binds directly to 16S rRNA where it nucleates assembly of the head domain of the 30S subunit. Is located at the subunit interface close to the decoding center, probably blocks exit of the E-site tRNA. This is Small ribosomal subunit protein uS7 from Opitutus terrae (strain DSM 11246 / JCM 15787 / PB90-1).